The chain runs to 90 residues: Small ribosomal subunit protein uS15c (90 aa).

This sequence belongs to the universal ribosomal protein uS15 family. Part of the 30S ribosomal subunit.

Its subcellular location is the plastid. It localises to the chloroplast. The chain is Small ribosomal subunit protein uS15c (rps15-A) from Ipomoea purpurea (Common morning glory).